Reading from the N-terminus, the 993-residue chain is DNA-binding protein SMUBP-2 (993 aa).

The residue at position 2 (Ala2) is an N-acetylalanine. ATP contacts are provided by residues 213–220, Gln402, Tyr441, and Glu570; that span reads GPPGTGKT. Residues 637-783 are SS DNA-binding; it reads TAFEYLDDIV…KARHITVSRR (147 aa). 3 disordered regions span residues 650-723, 765-815, and 837-872; these read YTHE…GPDR, LRHD…EPVT, and RQQS…KGPV. 2 stretches are compositionally biased toward polar residues: residues 667 to 683 and 703 to 716; these read PSTS…SGQE and HVQS…NGSD. The R3H domain maps to 721–784; the sequence is PDRTEHFRAT…ARHITVSRRS (64 aa). A compositionally biased stretch (basic and acidic residues) spans 765 to 775; that stretch reads LRHDSTGEGKA. Residues 784-794 are compositionally biased toward low complexity; it reads SPASSGSVAPQ. Phosphoserine occurs at positions 797 and 800. Residues 837-847 show a composition bias toward polar residues; the sequence is RQQSSQAQTAK. The short motif at 862–866 is the Nuclear localization signal element; it reads KKKKK. The segment at 889–938 adopts an AN1-type; degenerate zinc-finger fold; it reads VKADNTCSFSKCSVSTTTLGQFCMHCSHRYYLSHHLPEIHGCGEKARAHA. The Zn(2+) site is built by Cys911, Cys914, His928, and Cys930. Residues 953-993 are disordered; sequence GTKDRALDPAKRAQLQRRLDKKLGELSSQRTSRKKEKERGT. The span at 954 to 976 shows a compositional bias: basic and acidic residues; the sequence is TKDRALDPAKRAQLQRRLDKKLG.

It belongs to the DNA2/NAM7 helicase family. Homooligomer. Interacts with RUVBL1. Interacts with RUVBL2. Interacts with GTF3C1. Interacts with ABT1. Interacts with ribosomes. In all tissues examined.

Its subcellular location is the nucleus. The protein resides in the cytoplasm. It is found in the cell projection. It localises to the axon. The catalysed reaction is ATP + H2O = ADP + phosphate + H(+). Its function is as follows. 5' to 3' helicase that unwinds RNA and DNA duplexes in an ATP-dependent reaction. Specific to 5'-phosphorylated single-stranded guanine-rich sequences. May play a role in RNA metabolism, ribosome biogenesis or initiation of translation. May play a role in regulation of transcription. Interacts with tRNA-Tyr. This chain is DNA-binding protein SMUBP-2 (Ighmbp2), found in Mus musculus (Mouse).